The chain runs to 456 residues: Putative F-box/LRR-repeat protein At5g02700 (456 aa).

In terms of domain architecture, F-box spans 26–72 (ADFINYMPDDILHHILSFIPTDLAMRTSVLSRRWRHVWCETPCLDIT). 5 LRR repeats span residues 126–154 (VRDFTYSKTYRFPDIFYLSSSLKLLDVTL), 177–202 (FCQIPDESIHNILSGCPILESLTLDT), 206–224 (LERLDLSKSPNLRRLDINQ), 271–300 (LSPLTADGYQTMALEMLSKFHNVKRLTVGE), and 330–355 (FVRSVIPGISRLLQNSPGLKKLRPST).

In Arabidopsis thaliana (Mouse-ear cress), this protein is Putative F-box/LRR-repeat protein At5g02700.